Consider the following 109-residue polypeptide: MNFSSFIFKVSDVFKSVIHEASDVVTKADLDNANAHTHSLAVGLGIGIVLFLIAGLIIGYFISMKIMKRQLKKNPPISKDTIRMIYQQVGRKPSESQINEIYNRAVKQK.

The chain crosses the membrane as a helical span at residues 42–62; it reads VGLGIGIVLFLIAGLIIGYFI.

This sequence belongs to the UPF0154 family.

It is found in the cell membrane. The protein is UPF0154 protein UPA3_0273 of Ureaplasma parvum serovar 3 (strain ATCC 27815 / 27 / NCTC 11736).